Here is a 554-residue protein sequence, read N- to C-terminus: DNA ligase (554 aa).

ATP is bound at residue E253. K255 functions as the N6-AMP-lysine intermediate in the catalytic mechanism. ATP-binding residues include R260, R275, E304, F344, R418, and K424.

This sequence belongs to the ATP-dependent DNA ligase family. Requires Mg(2+) as cofactor.

The enzyme catalyses ATP + (deoxyribonucleotide)n-3'-hydroxyl + 5'-phospho-(deoxyribonucleotide)m = (deoxyribonucleotide)n+m + AMP + diphosphate.. Functionally, DNA ligase that seals nicks in double-stranded DNA during DNA replication, DNA recombination and DNA repair. In Haloarcula marismortui (strain ATCC 43049 / DSM 3752 / JCM 8966 / VKM B-1809) (Halobacterium marismortui), this protein is DNA ligase.